The primary structure comprises 402 residues: Zinc finger CCHC domain-containing protein 12 (402 aa).

The segment at 308–341 (IDSPHNSRAQFPSTSGGSGYKNNGPGEMRRARKR) is disordered. The span at 311–322 (PHNSRAQFPSTS) shows a compositional bias: polar residues. A CCHC-type zinc finger spans residues 345–362 (IRCSYCGEEGHSKETCDN).

This sequence belongs to the ZCCHC12 family. Interacts with SMAD1 and CREB-binding protein (CBP). Forms a protein-DNA complex through its association with SMAD1.

Functionally, transcriptional coactivator in the bone morphogenetic protein (BMP)-signaling pathway. It positively modulates BMP signaling by interacting with SMAD1 and associating with CBP in the transcription complex. It contributes to the BMP-induced enhancement of cholinergic-neuron-specific gene expression. This Homo sapiens (Human) protein is Zinc finger CCHC domain-containing protein 12 (ZCCHC12).